A 252-amino-acid chain; its full sequence is Cell division protein ZapD (252 aa).

Belongs to the ZapD family. As to quaternary structure, interacts with FtsZ.

It localises to the cytoplasm. Functionally, cell division factor that enhances FtsZ-ring assembly. Directly interacts with FtsZ and promotes bundling of FtsZ protofilaments, with a reduction in FtsZ GTPase activity. This is Cell division protein ZapD from Cupriavidus necator (strain ATCC 17699 / DSM 428 / KCTC 22496 / NCIMB 10442 / H16 / Stanier 337) (Ralstonia eutropha).